Here is a 486-residue protein sequence, read N- to C-terminus: MTVKSQQQIIDSFKQANQDQLFQYYDSLTIDQQQEFIDQLSTIEEPAKLISTVEQAIQFSQTNSTSRNFTQLPNEQTASTLDLSKDILQNWTELGLKAIGNGEVAVLLMAGGQGTRLGSSAPKGCFNIELPSQKSLFQIQAEKILKIEQLAQQYLKSTKKPIINWYIMTSGPTRNATESFFIENNYFGLNSHQVIFFNQGTLPCFNLQGNKILLESKNSICQSPDGNGGLYKALKDNGILDDLNSKGIKHIHMYCVDNCLVKVADPIFIGFAIAKKFDLATKVVRKRDANESVGLIVLDQDNQKPCVIEYSEISQELANKKDPQDSSKLFLRAANIVNHYYSVEFLNKMIPKWISSQKYLPFHIAKKKIPSLNLENGEFYKPTEPNGIKLEQFIFDVFPSVELNKFGCLEVDRLDEFSPLKNADGAKNDTPTTCRNHYLERSSKWVIQNGGVIDNQGLVEVDSKTSYGGEGLEFVNGKHFKNGDII.

Residues 109–112 (MAGG) carry the Substrate binding motif. UTP is bound by residues 109 to 112 (MAGG), Lys123, Gln199, and Gly226. Residue Asn227 coordinates substrate. Asp257 contacts UTP. Positions 309 to 310 (EY) match the Substrate binding motif. Lys389 contacts UTP. Substrate is bound at residue Lys421.

It belongs to the UDPGP type 1 family.

The protein localises to the cytoplasm. The enzyme catalyses N-acetyl-alpha-D-glucosamine 1-phosphate + UTP + H(+) = UDP-N-acetyl-alpha-D-glucosamine + diphosphate. The protein operates within nucleotide-sugar biosynthesis; UDP-N-acetyl-alpha-D-glucosamine biosynthesis; UDP-N-acetyl-alpha-D-glucosamine from N-acetyl-alpha-D-glucosamine 1-phosphate: step 1/1. The polypeptide is UDP-N-acetylglucosamine pyrophosphorylase (UAP1) (Candida albicans (Yeast)).